We begin with the raw amino-acid sequence, 524 residues long: Light-independent protochlorophyllide reductase subunit B (524 aa).

Aspartate 36 contributes to the [4Fe-4S] cluster binding site. Aspartate 290 acts as the Proton donor in catalysis. Residue 425–426 participates in substrate binding; the sequence is GL.

Belongs to the ChlB/BchB/BchZ family. As to quaternary structure, protochlorophyllide reductase is composed of three subunits; ChlL, ChlN and ChlB. Forms a heterotetramer of two ChlB and two ChlN subunits. [4Fe-4S] cluster is required as a cofactor.

It carries out the reaction chlorophyllide a + oxidized 2[4Fe-4S]-[ferredoxin] + 2 ADP + 2 phosphate = protochlorophyllide a + reduced 2[4Fe-4S]-[ferredoxin] + 2 ATP + 2 H2O. The protein operates within porphyrin-containing compound metabolism; chlorophyll biosynthesis (light-independent). Component of the dark-operative protochlorophyllide reductase (DPOR) that uses Mg-ATP and reduced ferredoxin to reduce ring D of protochlorophyllide (Pchlide) to form chlorophyllide a (Chlide). This reaction is light-independent. The NB-protein (ChlN-ChlB) is the catalytic component of the complex. The sequence is that of Light-independent protochlorophyllide reductase subunit B from Synechococcus sp. (strain CC9605).